A 331-amino-acid chain; its full sequence is tRNA pseudouridine synthase B (331 aa).

D51 serves as the catalytic Nucleophile.

It belongs to the pseudouridine synthase TruB family. Type 1 subfamily.

It carries out the reaction uridine(55) in tRNA = pseudouridine(55) in tRNA. Responsible for synthesis of pseudouridine from uracil-55 in the psi GC loop of transfer RNAs. In Verminephrobacter eiseniae (strain EF01-2), this protein is tRNA pseudouridine synthase B.